The following is a 598-amino-acid chain: Nuclear receptor subfamily 4 group A member 2 (598 aa).

Residues 1-22 (MPCVQAQYGSSPQGASPASQSY) are disordered. A compositionally biased stretch (low complexity) spans 8-22 (YGSSPQGASPASQSY). Positions 260-335 (EGLCAVCGDN…VGMVKEVVRT (76 aa)) form a DNA-binding region, nuclear receptor. 2 consecutive NR C4-type zinc fingers follow at residues 263-283 (CAVCGDNAACQHYGVRTCEGC) and 299-323 (CLANKNCPVDKRRRNRCQYCRFQKC). Residues 287–314 (FKRTVQKNAKYVCLANKNCPVDKRRRNR) carry the Bipartite nuclear localization signal (NLS1) motif. The interval 337–361 (SLKGRRGRLPSKPKSPQEPSPPSPP) is disordered. The short motif at 338–350 (LKGRRGRLPSKPK) is the Nuclear localization signal (NLS1) element. Pro residues predominate over residues 352 to 361 (PQEPSPPSPP). The NR LBD domain occupies 360 to 595 (PPVSLISALV…AIIDKLFLDT (236 aa)). Positions 443 to 452 (FLELFVLRLA) match the nuclear export sequence (NES1) motif. Residues 568-577 (QGLQRIFYLK) carry the nuclear export sequence (NES2) motif.

This sequence belongs to the nuclear hormone receptor family. NR4 subfamily. As to quaternary structure, interacts with SFPQ, NCOR2, SIN3A and HADC1. The interaction with NCOR2 increases in the absence of PITX3. Interacts with PER2. Expressed in a number of cell lines of T-cell, B-cell and fibroblast origin. Strong expression in brain tissue.

Its subcellular location is the cytoplasm. It is found in the nucleus. Functionally, transcriptional regulator which is important for the differentiation and maintenance of meso-diencephalic dopaminergic (mdDA) neurons during development. It is crucial for expression of a set of genes such as SLC6A3, SLC18A2, TH and DRD2 which are essential for development of mdDA neurons. The protein is Nuclear receptor subfamily 4 group A member 2 (NR4A2) of Homo sapiens (Human).